A 309-amino-acid polypeptide reads, in one-letter code: Ribose-phosphate pyrophosphokinase (309 aa).

ATP is bound by residues aspartate 42–glutamate 44 and arginine 102–glutamine 103. Residues histidine 136 and aspartate 175 each coordinate Mg(2+). Lysine 199 is an active-site residue. Residues arginine 201, aspartate 226, and serine 230–threonine 234 each bind D-ribose 5-phosphate.

The protein belongs to the ribose-phosphate pyrophosphokinase family. Class III (archaeal) subfamily. The cofactor is Mg(2+).

It is found in the cytoplasm. It catalyses the reaction D-ribose 5-phosphate + ATP = 5-phospho-alpha-D-ribose 1-diphosphate + AMP + H(+). The protein operates within metabolic intermediate biosynthesis; 5-phospho-alpha-D-ribose 1-diphosphate biosynthesis; 5-phospho-alpha-D-ribose 1-diphosphate from D-ribose 5-phosphate (route I): step 1/1. Its function is as follows. Involved in the biosynthesis of the central metabolite phospho-alpha-D-ribosyl-1-pyrophosphate (PRPP) via the transfer of pyrophosphoryl group from ATP to 1-hydroxyl of ribose-5-phosphate (Rib-5-P). This Aeropyrum pernix (strain ATCC 700893 / DSM 11879 / JCM 9820 / NBRC 100138 / K1) protein is Ribose-phosphate pyrophosphokinase.